A 326-amino-acid chain; its full sequence is Delta-aminolevulinic acid dehydratase (326 aa).

Cys-125, Cys-127, and Cys-135 together coordinate Zn(2+). Lys-200 serves as the catalytic Schiff-base intermediate with substrate. The 5-aminolevulinate site is built by Arg-210 and Arg-222. Glu-238 is a binding site for Mg(2+). The active-site Schiff-base intermediate with substrate is Lys-253. Position 279 (Ser-279) interacts with 5-aminolevulinate.

It belongs to the ALAD family. As to quaternary structure, homooctamer. Requires Zn(2+) as cofactor.

The enzyme catalyses 2 5-aminolevulinate = porphobilinogen + 2 H2O + H(+). The protein operates within porphyrin-containing compound metabolism; protoporphyrin-IX biosynthesis; coproporphyrinogen-III from 5-aminolevulinate: step 1/4. In terms of biological role, catalyzes an early step in the biosynthesis of tetrapyrroles. Binds two molecules of 5-aminolevulinate per subunit, each at a distinct site, and catalyzes their condensation to form porphobilinogen. This chain is Delta-aminolevulinic acid dehydratase (hemB), found in Methanothermobacter thermautotrophicus (strain ATCC 29096 / DSM 1053 / JCM 10044 / NBRC 100330 / Delta H) (Methanobacterium thermoautotrophicum).